The following is a 114-amino-acid chain: Phycoerythrin alpha-1 subunit (114 aa).

Residues Asp52, Ser53, Glu63, Arg64, Cys67, Thr72, Lys74, Ala75, and Lys84 each contribute to the (2R,3E)-phycoerythrobilin site.

The protein belongs to the phycoerythrin family. As to quaternary structure, heterotetramer of 2 different alpha chains and 2 identical beta chains which form 2 alpha-beta heterodimers within the heterotetramer. The two alpha-beta heterodimers are rotated to an open configuration in contrast to the closed configuration found in other cryptophyte species due to the insertion of a single amino acid, Asp-65, in a conserved region of the alpha chain. In the open form, the central chromophores are not in physical contact but are separated by a water-filled channel. Post-translationally, contains three phycoerythrobilin chromophores with binding mediated by both the alpha and beta subunits.

It localises to the plastid. It is found in the chloroplast thylakoid membrane. Light-harvesting photosynthetic tetrapyrrole chromophore-protein from the phycobiliprotein complex. This chain is Phycoerythrin alpha-1 subunit, found in Hemiselmis andersenii (Cryptophyte alga).